The primary structure comprises 250 residues: Proteasome subunit alpha (250 aa).

It belongs to the peptidase T1A family. In terms of assembly, the 20S proteasome core is composed of 14 alpha and 14 beta subunits that assemble into four stacked heptameric rings, resulting in a barrel-shaped structure. The two inner rings, each composed of seven catalytic beta subunits, are sandwiched by two outer rings, each composed of seven alpha subunits. The catalytic chamber with the active sites is on the inside of the barrel. Has a gated structure, the ends of the cylinder being occluded by the N-termini of the alpha-subunits. Is capped at one or both ends by the proteasome regulatory ATPase, PAN.

The protein localises to the cytoplasm. Its activity is regulated as follows. The formation of the proteasomal ATPase PAN-20S proteasome complex, via the docking of the C-termini of PAN into the intersubunit pockets in the alpha-rings, triggers opening of the gate for substrate entry. Interconversion between the open-gate and close-gate conformations leads to a dynamic regulation of the 20S proteasome proteolysis activity. Its function is as follows. Component of the proteasome core, a large protease complex with broad specificity involved in protein degradation. The chain is Proteasome subunit alpha from Haloquadratum walsbyi (strain DSM 16790 / HBSQ001).